A 310-amino-acid polypeptide reads, in one-letter code: AMMECR1-like protein (310 aa).

A disordered region spans residues 26–95 (LSGSGTHSHG…LSPLPRPNGT (70 aa)). Positions 28–66 (GSGTHSHGNQSTTVPGSSSGPLQNHQHVDSSSGRENVSD) are enriched in polar residues. Position 74 is a phosphoserine (Ser74). The region spanning 97-291 (NTTKNLVVTA…ISYAEYIASR (195 aa)) is the AMMECR1 domain.

In Homo sapiens (Human), this protein is AMMECR1-like protein (AMMECR1L).